Consider the following 75-residue polypeptide: MNVGDRVRVTSSVVVYHHPEHKKTAFDLQGMEGEVAAVLTEWQGRPISANLPVLVKFEQRFKAHFRPDEVTLIED.

Positions 43 to 46 (QGRP) are interaction with ferredoxin.

Belongs to the ferredoxin thioredoxin reductase alpha subunit family. As to quaternary structure, heterodimer of subunit A (variable subunit) and subunit B (catalytic subunit). Heterodimeric FTR forms a complex with ferredoxin and thioredoxin.

Functionally, variable subunit of the ferredoxin-thioredoxin reductase (FTR), which catalyzes the two-electron reduction of thioredoxins by the electrons provided by reduced ferredoxin. In Synechocystis sp. (strain ATCC 27184 / PCC 6803 / Kazusa), this protein is Ferredoxin-thioredoxin reductase, variable chain (ftrV).